Consider the following 393-residue polypeptide: Fructose-bisphosphate aldolase 4, cytosolic (393 aa).

Residue R73 participates in substrate binding. Position 207 is an S-glutathionyl cysteine; transient; alternate (C207). The residue at position 207 (C207) is an S-nitrosocysteine; transient; alternate. E217 acts as the Proton acceptor in catalysis. The Schiff-base intermediate with dihydroxyacetone-P role is filled by K259. Residues 301-303 (SGG) and R333 each bind substrate.

This sequence belongs to the class I fructose-bisphosphate aldolase family. Homotetramer. In terms of processing, S-glutathionylated at Cys-207. S-nitrosylated at Cys-207. Highly expressed in flowers.

It is found in the cytoplasm. The protein resides in the cytosol. It carries out the reaction beta-D-fructose 1,6-bisphosphate = D-glyceraldehyde 3-phosphate + dihydroxyacetone phosphate. Its pathway is carbohydrate degradation; glycolysis; D-glyceraldehyde 3-phosphate and glycerone phosphate from D-glucose: step 4/4. In terms of biological role, fructose-bisphosphate aldolase that plays a key role in glycolysis and gluconeogenesis. The protein is Fructose-bisphosphate aldolase 4, cytosolic of Arabidopsis thaliana (Mouse-ear cress).